Reading from the N-terminus, the 930-residue chain is Isoleucine--tRNA ligase (930 aa).

Positions 57-67 (PYANGNIHVGH) match the 'HIGH' region motif. E554 is an L-isoleucyl-5'-AMP binding site. The 'KMSKS' region motif lies at 595–599 (KMSKS). An ATP-binding site is contributed by K598. Residues C888, C891, C908, and C911 each contribute to the Zn(2+) site.

The protein belongs to the class-I aminoacyl-tRNA synthetase family. IleS type 1 subfamily. In terms of assembly, monomer. It depends on Zn(2+) as a cofactor.

The protein resides in the cytoplasm. It carries out the reaction tRNA(Ile) + L-isoleucine + ATP = L-isoleucyl-tRNA(Ile) + AMP + diphosphate. Catalyzes the attachment of isoleucine to tRNA(Ile). As IleRS can inadvertently accommodate and process structurally similar amino acids such as valine, to avoid such errors it has two additional distinct tRNA(Ile)-dependent editing activities. One activity is designated as 'pretransfer' editing and involves the hydrolysis of activated Val-AMP. The other activity is designated 'posttransfer' editing and involves deacylation of mischarged Val-tRNA(Ile). The chain is Isoleucine--tRNA ligase from Streptococcus pneumoniae (strain JJA).